The primary structure comprises 134 residues: Waprin-Phi1 (134 aa).

Residues 1 to 23 (MTLRRGSCPLLLFSLVGLLTTCA) form the signal peptide. 2 WAP domains span residues 36-82 (VAEK…SCQI) and 83-133 (PDEK…TTAR). 8 disulfides stabilise this stretch: cysteine 43/cysteine 72, cysteine 55/cysteine 76, cysteine 59/cysteine 71, cysteine 65/cysteine 80, cysteine 90/cysteine 120, cysteine 103/cysteine 124, cysteine 107/cysteine 119, and cysteine 113/cysteine 129.

Belongs to the venom waprin family. In terms of tissue distribution, expressed by the venom gland.

Its subcellular location is the secreted. In terms of biological role, damages membranes of susceptible bacteria. Has no hemolytic activity. Not toxic to mice. Does not inhibit the proteinases elastase and cathepsin G. This Philodryas olfersii (Green snake) protein is Waprin-Phi1.